Here is a 279-residue protein sequence, read N- to C-terminus: Methyltransferase prhM (279 aa).

S-adenosyl-L-methionine is bound by residues 124–125 and 152–153; these read DI and DV.

It belongs to the class I-like SAM-binding methyltransferase superfamily.

The protein operates within secondary metabolite biosynthesis; terpenoid biosynthesis. In terms of biological role, methyltransferase; part of the gene cluster that mediates the biosynthesis of paraherquonin, a meroterpenoid with a unique, highly congested hexacyclic molecular architecture. The first step of the pathway is the synthesis of 3,5-dimethylorsellinic acid (DMOA) by the polyketide synthase prhL. Synthesis of DMOA is followed by farnesylation by the prenyltransferase prhE, methylesterification by the methyl-transferase prhM, epoxidation of the prenyl chain by the flavin-dependent monooxygenase prhF, and cyclization of the farnesyl moiety by the terpene cyclase prhH, to yield the tetracyclic intermediate, protoaustinoid A. The short chain dehydrogenase prhI then oxidizes the C-3 alcohol group of the terpene cyclase product to transform protoaustinoid A into protoaustinoid B. The FAD-binding monooxygenase prhJ catalyzes the oxidation of protoaustinoid B into preaustinoid A which is further oxidized into preaustinoid A1 by FAD-binding monooxygenase phrK. Finally, prhA leads to berkeleydione via the berkeleyone B intermediate. PrhA is a multifunctional dioxygenase that first desaturates at C5-C6 to form berkeleyone B, followed by rearrangement of the A/B-ring to form the cycloheptadiene moiety in berkeleydione. Berkeleydione serves as the key intermediate for the biosynthesis of paraherquonin as well as many other meroterpenoids. The cytochrome P450 monooxygenases prhB, prhD, and prhN, as well as the isomerase prhC, are probably involved in the late stage of paraherquonin biosynthesis, after the production of berkeleydione. Especially prhC might be a multifunctional enzyme that catalyzes the D-ring expansion via intramolecular methoxy rearrangement, as well as the hydrolysis of the expanded D-ring. In Penicillium brasilianum, this protein is Methyltransferase prhM.